The following is a 178-amino-acid chain: Large ribosomal subunit protein uL6 (178 aa).

The protein belongs to the universal ribosomal protein uL6 family. In terms of assembly, part of the 50S ribosomal subunit.

Its function is as follows. This protein binds to the 23S rRNA, and is important in its secondary structure. It is located near the subunit interface in the base of the L7/L12 stalk, and near the tRNA binding site of the peptidyltransferase center. The protein is Large ribosomal subunit protein uL6 of Levilactobacillus brevis (strain ATCC 367 / BCRC 12310 / CIP 105137 / JCM 1170 / LMG 11437 / NCIMB 947 / NCTC 947) (Lactobacillus brevis).